Consider the following 451-residue polypeptide: Ubiquinone biosynthesis monooxygenase COQ6, mitochondrial (451 aa).

Belongs to the UbiH/COQ6 family. Component of a multi-subunit COQ enzyme complex. The cofactor is FAD.

The protein localises to the mitochondrion inner membrane. It carries out the reaction a 4-hydroxy-3-(all-trans-polyprenyl)benzoate + 2 reduced [2Fe-2S]-[ferredoxin] + O2 + 2 H(+) = a 3,4-dihydroxy-5-(all-trans-polyprenyl)benzoate + 2 oxidized [2Fe-2S]-[ferredoxin] + H2O. It catalyses the reaction a 2-methoxy-6-(all-trans-polyprenyl)phenol + 2 reduced [2Fe-2S]-[ferredoxin] + O2 + 2 H(+) = a 2-methoxy-6-(all-trans-polyprenyl)benzene-1,4-diol + 2 oxidized [2Fe-2S]-[ferredoxin] + H2O. Its pathway is cofactor biosynthesis; ubiquinone biosynthesis. FAD-dependent monooxygenase required for two non-consecutive steps during ubiquinone biosynthesis. Required for the C5-ring hydroxylation during ubiquinone biosynthesis by catalyzing the hydroxylation of 4-hydroxy-3-(all-trans-polyprenyl)benzoic acid to 3,4-dihydroxy-5-(all-trans-polyprenyl)benzoic acid. Also acts downstream of coq4, for the C1-hydroxylation during ubiquinone biosynthesis by catalyzing the hydroxylation of 2-methoxy-6-(all-trans-polyprenyl)phenol to 2-methoxy-6-(all-trans-polyprenyl)benzene-1,4-diol. The electrons required for the hydroxylation reaction are funneled indirectly to coq-6 from NADPH via a ferredoxin/ferredoxin reductase system. The polypeptide is Ubiquinone biosynthesis monooxygenase COQ6, mitochondrial (Caenorhabditis elegans).